A 152-amino-acid chain; its full sequence is Nucleoside diphosphate kinase A (152 aa).

Residues lysine 12, phenylalanine 60, arginine 88, and threonine 94 each contribute to the ATP site. Residue lysine 100 forms a Glycyl lysine isopeptide (Lys-Gly) (interchain with G-Cter in ubiquitin) linkage. Residues arginine 105 and asparagine 115 each coordinate ATP. Histidine 118 acts as the Pros-phosphohistidine intermediate in catalysis. A phosphoserine mark is found at serine 120, serine 122, and serine 125.

Belongs to the NDK family. In terms of assembly, hexamer of two different chains: An and B (A6, A5B, A4B2, A3B3, A2B4, AB5, B6). Interacts with PRUNE1. Component of the SET complex, composed of at least ANP32A, APEX1, HMGB2, NME1, SET and TREX1. Within this complex, interacts directly with SET. Also interacts with TREX1, but only following translocation to the nucleus. Mg(2+) serves as cofactor.

It is found in the cytoplasm. It localises to the nucleus. It catalyses the reaction a 2'-deoxyribonucleoside 5'-diphosphate + ATP = a 2'-deoxyribonucleoside 5'-triphosphate + ADP. The enzyme catalyses a ribonucleoside 5'-diphosphate + ATP = a ribonucleoside 5'-triphosphate + ADP. With respect to regulation, autophosphorylation at His-118 increases serine/threonine protein kinase activity of the enzyme. Interaction with the SET complex inhibits exonuclease activity. Functionally, major role in the synthesis of nucleoside triphosphates other than ATP. The ATP gamma phosphate is transferred to the NDP beta phosphate via a ping-pong mechanism, using a phosphorylated active-site intermediate. Possesses nucleoside-diphosphate kinase, serine/threonine-specific protein kinase, geranyl and farnesyl pyrophosphate kinase, histidine protein kinase and 3'-5' exonuclease activities. Involved in cell proliferation, differentiation and development, signal transduction, G protein-coupled receptor endocytosis, and gene expression. Required for neural development including neural patterning and cell fate determination. During GZMA-mediated cell death, works in concert with TREX1. NME1 nicks one strand of DNA and TREX1 removes bases from the free 3' end to enhance DNA damage and prevent DNA end reannealing and rapid repair. This is Nucleoside diphosphate kinase A (NME1) from Canis lupus familiaris (Dog).